The following is a 133-amino-acid chain: MANHDPISDMLTRIRNASEKRHETTKVPASRMTRSIAKVLQQEGFISEINEEGEGFRAELVLSLKYSGKHRLPTIRSMQRVSKPGLRIYKNTRGLPKVLGGLGVAIISTSKGVMSDRDARREGVGGEVLCYVY.

The segment at methionine 1–serine 30 is disordered. A compositionally biased stretch (basic and acidic residues) spans asparagine 16–threonine 25.

The protein belongs to the universal ribosomal protein uS8 family. As to quaternary structure, part of the 30S ribosomal subunit. Contacts proteins S5 and S12.

Functionally, one of the primary rRNA binding proteins, it binds directly to 16S rRNA central domain where it helps coordinate assembly of the platform of the 30S subunit. The protein is Small ribosomal subunit protein uS8 of Synechococcus sp. (strain CC9902).